Here is a 129-residue protein sequence, read N- to C-terminus: Arsenate-mycothiol transferase ArsC2 (129 aa).

Belongs to the low molecular weight phosphotyrosine protein phosphatase family.

It is found in the cytoplasm. It carries out the reaction mycothiol + arsenate = arseno-mycothiol + H2O. Its function is as follows. Involved in defense against toxic arsenate. Involved in the mycothiol/myoredoxin redox pathway which uses a mycothioltransferase mechanism; facilitates adduct formation between arsenate and mycothiol. This chain is Arsenate-mycothiol transferase ArsC2 (arsC2), found in Corynebacterium glutamicum (strain ATCC 13032 / K051).